Here is a 96-residue protein sequence, read N- to C-terminus: Small ribosomal subunit protein bS16 (96 aa).

The protein belongs to the bacterial ribosomal protein bS16 family.

The protein is Small ribosomal subunit protein bS16 of Vesicomyosocius okutanii subsp. Calyptogena okutanii (strain HA).